A 321-amino-acid chain; its full sequence is Glucokinase (321 aa).

8–13 (GDVGGT) is a binding site for ATP.

It belongs to the bacterial glucokinase family.

It localises to the cytoplasm. The catalysed reaction is D-glucose + ATP = D-glucose 6-phosphate + ADP + H(+). The protein is Glucokinase of Shigella sonnei (strain Ss046).